A 341-amino-acid polypeptide reads, in one-letter code: Antihemorrhagic factor BJ46a (341 aa).

The N-terminal stretch at 1–19 (MNSLVALVLLGQIIGSTLS) is a signal peptide. 2 Cystatin fetuin-A-type domains span residues 22–130 (VRGD…AKCH) and 141–254 (RNCP…SDCV). Residues 23-25 (RGD) carry the Cell attachment site motif. 6 disulfides stabilise this stretch: Cys28/Cys332, Cys85/Cys96, Cys110/Cys129, Cys143/Cys146, Cys205/Cys217, and Cys230/Cys253. The N-linked (GlcNAc...) asparagine glycan is linked to Asn95. Asn204 is a glycosylation site (N-linked (GlcNAc...) asparagine). Residues Asn282 and Asn293 are each glycosylated (N-linked (GlcNAc...) asparagine).

In terms of assembly, homodimer. As to expression, expressed by the liver.

Its subcellular location is the secreted. In terms of biological role, potent inhibitor of hemorrhagic activity but also proteolytic activities of atrolysin C and jararhagin. Inhibition occurs by formation of a non-covalent complex between BJ46a and the proteinases at their metalloproteinase domains. This Bothrops jararaca (Jararaca) protein is Antihemorrhagic factor BJ46a.